Here is a 207-residue protein sequence, read N- to C-terminus: Keratin-associated protein 27-1 (207 aa).

Residues 184–207 form a disordered region; that stretch reads QLLESSPGVEPTCCVTGGSQLPSK.

It belongs to the PMG family. As to quaternary structure, interacts with hair keratins.

In the hair cortex, hair keratin intermediate filaments are embedded in an interfilamentous matrix, consisting of hair keratin-associated proteins (KRTAP), which are essential for the formation of a rigid and resistant hair shaft through their extensive disulfide bond cross-linking with abundant cysteine residues of hair keratins. The matrix proteins include the high-sulfur and high-glycine-tyrosine keratins. This chain is Keratin-associated protein 27-1 (KRTAP27-1), found in Homo sapiens (Human).